Consider the following 524-residue polypeptide: MNTHPSHPDHPADTLPARGNREGTTARTYEVRTFGCQMNVHDSERLSGLLEEAGYTAAGEGDTPDLIVFNTCAVRENADQRLYGTLGNLRAVKENHPGMQIAVGGCLAQKDKDTVVKKAPWVDVVFGTHNIASLPTLLNRAEHNQKAEVEIVDSLEQFPSVLPAKRESAYAGWVSVSVGCNNTCTFCIVPSLRGKEQDRRPGDILAEVQALVDQGVSEVTLLGQNVNAYGVNFVDPELERDRSAFSKLLRACGDIEGLERVRFTSPHPAEFTSDVIDAMAETPNICPQLHMPLQSGSDRVLKEMRRSYRSAKFLAILDEVRAKIPHASITTDIIVGFPGETEEDFQATLDVVEKARFTSAYTFQYSPRPGTPAADYENQVPKKVVQERYERLMALQERICEEENQKFIGQTVELLVQAGGGRKNDATKRMSGRARDGRLVHFTPVGTIDGEIRPGDVVTVEVTEAKPFFLIADAGVLTHRRTRAGDNSAVGQVPTTAPIGVGLGLPRIGAPVPAPATPDNACGC.

Residues 1-12 (MNTHPSHPDHPA) are compositionally biased toward basic and acidic residues. The interval 1–23 (MNTHPSHPDHPADTLPARGNREG) is disordered. The MTTase N-terminal domain maps to 27-143 (RTYEVRTFGC…LPTLLNRAEH (117 aa)). Positions 36, 72, 106, 180, 184, and 187 each coordinate [4Fe-4S] cluster. The 237-residue stretch at 166-402 (RESAYAGWVS…MALQERICEE (237 aa)) folds into the Radical SAM core domain. The 72-residue stretch at 405-476 (QKFIGQTVEL…PFFLIADAGV (72 aa)) folds into the TRAM domain.

The protein belongs to the methylthiotransferase family. MiaB subfamily. In terms of assembly, monomer. It depends on [4Fe-4S] cluster as a cofactor.

The protein localises to the cytoplasm. It catalyses the reaction N(6)-dimethylallyladenosine(37) in tRNA + (sulfur carrier)-SH + AH2 + 2 S-adenosyl-L-methionine = 2-methylsulfanyl-N(6)-dimethylallyladenosine(37) in tRNA + (sulfur carrier)-H + 5'-deoxyadenosine + L-methionine + A + S-adenosyl-L-homocysteine + 2 H(+). Functionally, catalyzes the methylthiolation of N6-(dimethylallyl)adenosine (i(6)A), leading to the formation of 2-methylthio-N6-(dimethylallyl)adenosine (ms(2)i(6)A) at position 37 in tRNAs that read codons beginning with uridine. In Corynebacterium efficiens (strain DSM 44549 / YS-314 / AJ 12310 / JCM 11189 / NBRC 100395), this protein is tRNA-2-methylthio-N(6)-dimethylallyladenosine synthase.